We begin with the raw amino-acid sequence, 340 residues long: Organic solute transporter subunit alpha (340 aa).

Over Met1–Ser52 the chain is Extracellular. The N-linked (GlcNAc...) asparagine glycan is linked to Asn25. A helical membrane pass occupies residues Leu53 to Val73. Residues Tyr74–Thr87 lie on the Cytoplasmic side of the membrane. A helical membrane pass occupies residues Leu88–Ile108. Over Pro109–Arg110 the chain is Extracellular. A helical membrane pass occupies residues Ala111–Met131. Over Gln132–Gln186 the chain is Cytoplasmic. A helical membrane pass occupies residues Tyr187–Phe207. Residues Asp208–Leu219 lie on the Extracellular side of the membrane. A helical transmembrane segment spans residues Trp220–Phe240. Topologically, residues Arg241–Lys255 are cytoplasmic. A helical transmembrane segment spans residues Phe256–Leu276. Topologically, residues Ala277–Gln295 are extracellular. Residues Val296–Tyr316 form a helical membrane-spanning segment. The Cytoplasmic portion of the chain corresponds to Tyr317–Ala340. Ser330 is modified (phosphoserine).

Belongs to the OST-alpha family. In terms of assembly, interacts with SLC51B. The Ost-alpha/Ost-beta complex is a heterodimer composed of alpha (SLC51A) and beta (SLC51B) subunit.

It localises to the cell membrane. Its subcellular location is the endoplasmic reticulum membrane. It carries out the reaction taurocholate(out) = taurocholate(in). The enzyme catalyses estrone 3-sulfate(out) = estrone 3-sulfate(in). It catalyses the reaction dehydroepiandrosterone 3-sulfate(out) = dehydroepiandrosterone 3-sulfate(in). The catalysed reaction is tauroursodeoxycholate(out) = tauroursodeoxycholate(in). It carries out the reaction glycoursodeoxycholate(out) = glycoursodeoxycholate(in). The enzyme catalyses glycocholate(out) = glycocholate(in). It catalyses the reaction taurochenodeoxycholate(out) = taurochenodeoxycholate(in). The catalysed reaction is glycochenodeoxycholate(out) = glycochenodeoxycholate(in). It carries out the reaction taurodeoxycholate(out) = taurodeoxycholate(in). The enzyme catalyses glycodeoxycholate(out) = glycodeoxycholate(in). It catalyses the reaction prostaglandin E2(out) = prostaglandin E2(in). Essential component of the Ost-alpha/Ost-beta complex, a heterodimer that acts as the intestinal basolateral transporter responsible for bile acid export from enterocytes into portal blood. Efficiently transports the major species of bile acids (taurocholate). Taurine conjugates are transported more efficiently across the basolateral membrane than glycine-conjugated bile acids. Can also transport steroids such as estrone 3-sulfate and dehydroepiandrosterone 3-sulfate, therefore playing a role in the enterohepatic circulation of sterols. Able to transport eicosanoids such as prostaglandin E2. This is Organic solute transporter subunit alpha (SLC51A) from Bos taurus (Bovine).